We begin with the raw amino-acid sequence, 308 residues long: 1D-myo-inositol 2-acetamido-2-deoxy-alpha-D-glucopyranoside deacetylase (308 aa).

Residues His37, Asp40, and His171 each contribute to the Zn(2+) site.

Belongs to the MshB deacetylase family. Requires Zn(2+) as cofactor.

It carries out the reaction 1D-myo-inositol 2-acetamido-2-deoxy-alpha-D-glucopyranoside + H2O = 1D-myo-inositol 2-amino-2-deoxy-alpha-D-glucopyranoside + acetate. In terms of biological role, catalyzes the deacetylation of 1D-myo-inositol 2-acetamido-2-deoxy-alpha-D-glucopyranoside (GlcNAc-Ins) in the mycothiol biosynthesis pathway. This is 1D-myo-inositol 2-acetamido-2-deoxy-alpha-D-glucopyranoside deacetylase from Mycobacterium sp. (strain KMS).